Reading from the N-terminus, the 66-residue chain is Alpha-bisabolene synthase (66 aa).

It belongs to the terpene synthase family. Tpsd subfamily. Mn(2+) is required as a cofactor. K(+) serves as cofactor.

It is found in the cytoplasm. The enzyme catalyses (2E,6E)-farnesyl diphosphate = (E,R)-alpha-bisabolene + diphosphate. It participates in terpene metabolism; oleoresin biosynthesis. In terms of biological role, involved in defensive oleoresin formation in conifers in response to insect attack or other injury. Involved in sesquiterpene (C15) olefins biosynthesis. In Pseudotsuga menziesii (Douglas-fir), this protein is Alpha-bisabolene synthase.